The primary structure comprises 715 residues: Polyribonucleotide nucleotidyltransferase (715 aa).

Mg(2+) is bound by residues Asp-497 and Asp-503. Residues 564–623 enclose the KH domain; sequence PRLLTMKIDPEQIGLVIGPGGKTIKSITEQTGSKIDIADDGTVTIAAIQAKKAERARDLI. In terms of domain architecture, S1 motif spans 633-701; sequence GEVYLGRVTR…NKGRLNLTRL (69 aa).

Belongs to the polyribonucleotide nucleotidyltransferase family. Mg(2+) serves as cofactor.

The protein localises to the cytoplasm. It carries out the reaction RNA(n+1) + phosphate = RNA(n) + a ribonucleoside 5'-diphosphate. Its function is as follows. Involved in mRNA degradation. Catalyzes the phosphorolysis of single-stranded polyribonucleotides processively in the 3'- to 5'-direction. This chain is Polyribonucleotide nucleotidyltransferase, found in Crocosphaera subtropica (strain ATCC 51142 / BH68) (Cyanothece sp. (strain ATCC 51142)).